A 222-amino-acid polypeptide reads, in one-letter code: Large ribosomal subunit protein mL64 (222 aa).

Disordered regions lie at residues 14–40 (LTAT…PWWP) and 188–222 (KRLK…APSS). Positions 144–213 (EKAQADKERR…AALAAAAAQD (70 aa)) form a coiled coil. A Nuclear localization signal motif is present at residues 184–200 (KKERKRLKEEKQRQKQE). Residues 188 to 201 (KRLKEEKQRQKQEA) show a composition bias toward basic and acidic residues. A compositionally biased stretch (low complexity) spans 202–216 (RAAALAAAAAQDPAA).

It belongs to the mitochondrion-specific ribosomal protein mL64 family. Component of the mitochondrial ribosome large subunit (39S) which comprises a 16S rRNA and about 50 distinct proteins. Interacts with GADD45A, GADD45B and GADD45G. Interacts with NR4A1 via the NR4A1 AB domain. Interacts with ATAD3A and ATAD3B.

The protein resides in the mitochondrion. It localises to the nucleus. Functionally, acts as a negative regulator of G1 to S cell cycle phase progression by inhibiting cyclin-dependent kinases. Inhibitory effects are additive with GADD45 proteins but also occur in the absence of GADD45 proteins. Acts as a repressor of the orphan nuclear receptor NR4A1 by inhibiting AB domain-mediated transcriptional activity. May be involved in the hormone-mediated regulation of NR4A1 transcriptional activity. May play a role in mitochondrial protein synthesis. In Chlorocebus aethiops (Green monkey), this protein is Large ribosomal subunit protein mL64 (GADD45GIP1).